Here is an 848-residue protein sequence, read N- to C-terminus: Adenylate cyclase (848 aa).

A catalytic region spans residues 1–535; sequence MYLYIETLKQ…DVSHHFPLRL (535 aa). Residues 541 to 848 form a regulatory region; sequence KALYSPCEIR…DTPLLQQYFS (308 aa). At H609 the chain carries Phosphohistidine; by CRR.

Belongs to the adenylyl cyclase class-1 family.

The protein localises to the cytoplasm. It carries out the reaction ATP = 3',5'-cyclic AMP + diphosphate. The protein is Adenylate cyclase (cyaA) of Shigella flexneri.